Here is a 273-residue protein sequence, read N- to C-terminus: MGKQKIIDARKAYYEGDIEKSKEIHSHYHNLDKHAEHHSLDKDHLKTIIFGSLDGIITIFAIVSGCVGANITPAQVIIIGVGNLFANAISMGFSEYTSSTAQIDFMLAERQREEWEIENCPTEEKQEMIDIYINKYKFDSKDAKNLVEITFRNKHFFLEHMMSEELGLILTNEDKSEAFKKGILMFLSFCFFGMIPLFSYVLYNLFFSAENYTSSFAVVFISTLITLFILGLFKSQFTTQKPIVCALSMVLNGSIAGMLPFLFGVLLKTNSGD.

Residues 1-47 are Cytoplasmic-facing; that stretch reads MGKQKIIDARKAYYEGDIEKSKEIHSHYHNLDKHAEHHSLDKDHLKT. The chain crosses the membrane as a helical span at residues 48–68; sequence IIFGSLDGIITIFAIVSGCVG. Topologically, residues 69–72 are vacuolar; it reads ANIT. The helical transmembrane segment at 73-93 threads the bilayer; that stretch reads PAQVIIIGVGNLFANAISMGF. The Cytoplasmic portion of the chain corresponds to 94-181; that stretch reads SEYTSSTAQI…NEDKSEAFKK (88 aa). Fe cation is bound by residues glutamate 113, glutamate 116, glutamate 124, glutamate 127, methionine 161, and glutamate 165. Residues 182-202 traverse the membrane as a helical segment; that stretch reads GILMFLSFCFFGMIPLFSYVL. The Vacuolar portion of the chain corresponds to 203–212; sequence YNLFFSAENY. A helical membrane pass occupies residues 213–233; that stretch reads TSSFAVVFISTLITLFILGLF. The Cytoplasmic portion of the chain corresponds to 234–246; the sequence is KSQFTTQKPIVCA. The chain crosses the membrane as a helical span at residues 247–267; that stretch reads LSMVLNGSIAGMLPFLFGVLL. The Vacuolar segment spans residues 268–273; it reads KTNSGD.

This sequence belongs to the CCC1 family. As to quaternary structure, monomer.

It localises to the vacuole membrane. Its subcellular location is the endoplasmic reticulum membrane. It catalyses the reaction Fe(2+)(in) = Fe(2+)(out). Vacuolar iron transporter involved in the transfer of iron ions from the cytosol to the vacuole for intracellular iron storage. Involved in detoxification of excess iron. The transport mechanism is not well defined and the role of protons is not clear. This is Vacuolar iron transporter from Plasmodium berghei (strain Anka).